Reading from the N-terminus, the 201-residue chain is Peptidyl-prolyl cis-trans isomerase FKBP11 (201 aa).

Residues 1-27 (MTLSPLLLPLQLLLLLLFSGAVCRAEA) form the signal peptide. A PPIase FKBP-type domain is found at 57–144 (GDTLHIHYTG…QYDVELIALI (88 aa)). The helical transmembrane segment at 156 to 176 (ILPLVGIAMVPALLGLIGYHL) threads the bilayer.

It belongs to the FKBP-type PPIase family. As to quaternary structure, interacts with IFITM5.

Its subcellular location is the membrane. It carries out the reaction [protein]-peptidylproline (omega=180) = [protein]-peptidylproline (omega=0). In terms of biological role, PPIases accelerate the folding of proteins during protein synthesis. The sequence is that of Peptidyl-prolyl cis-trans isomerase FKBP11 (Fkbp11) from Mus musculus (Mouse).